The sequence spans 322 residues: Rhomboid-like protein 16, chloroplastic (322 aa).

Residues 1 to 52 (MHAIFCRRVAVGCSSPQLTKLVTKQASQSRHSLSHLLPFDLSSRFVPPYVVS) constitute a chloroplast transit peptide. A run of 6 helical transmembrane segments spans residues 110–130 (WINGANGVVFGLVIANAAVFT), 166–186 (FSHVGATHIILNMMGLCYFGA), 201–221 (YFAGALGGSVFFLSSHALSVI), 238–258 (IGKLGANGPVYAITLLDMLLY), 265–285 (FGLMLRVPVFAGIYSLGLNII), and 295–315 (TLTSLDQLGGVVVAVIAWARI).

It belongs to the peptidase S54 family.

The protein localises to the plastid. It localises to the chloroplast membrane. Functionally, rhomboid-type serine protease that catalyzes intramembrane proteolysis. May cleave the plastid translocon component Tic40. This Arabidopsis thaliana (Mouse-ear cress) protein is Rhomboid-like protein 16, chloroplastic.